The sequence spans 196 residues: Probable malonic semialdehyde reductase RutE (196 aa).

It belongs to the nitroreductase family. HadB/RutE subfamily. FMN serves as cofactor.

It catalyses the reaction 3-hydroxypropanoate + NADP(+) = 3-oxopropanoate + NADPH + H(+). Its function is as follows. May reduce toxic product malonic semialdehyde to 3-hydroxypropionic acid, which is excreted. This chain is Probable malonic semialdehyde reductase RutE, found in Yersinia enterocolitica serotype O:8 / biotype 1B (strain NCTC 13174 / 8081).